The following is a 1211-amino-acid chain: Sterol 3-beta-glucosyltransferase (1211 aa).

Over residues 1–10 the composition is skewed to basic and acidic residues; sequence MSQLRPRDSS. Residues 1-61 form a disordered region; the sequence is MSQLRPRDSS…DETEAEDDID (61 aa). Positions 196–235 constitute a GRAM 1 domain; it reads EKLKTTFDLSDDDEFVNDYPCWLLHEVFLQGHIYITSRYL. The 100-residue stretch at 248 to 347 folds into the PH domain; sequence VTMSGALSIR…WVTDLRKHIF (100 aa). 2 disordered regions span residues 422 to 452 and 500 to 531; these read LTDS…KLSR and VVPN…PSNW. Positions 423 to 432 are enriched in acidic residues; it reads TDSDSSESDS. The span at 507 to 525 shows a compositional bias: basic and acidic residues; the sequence is SELKQDHAGDAPKDSEEPS. The 67-residue stretch at 586–652 folds into the GRAM 2 domain; sequence SRFRKHFSLP…SDIENVYNLK (67 aa). Ser770, Arg771, Asp773, Asn1046, Asn1072, Val1073, His1075, His1088, Ser1091, Gly1092, Thr1093, Asp1112, and Gln1113 together coordinate UDP-alpha-D-glucose.

Belongs to the glycosyltransferase 28 family.

The protein resides in the cytoplasm. It localises to the preautophagosomal structure membrane. It carries out the reaction a sterol + UDP-alpha-D-glucose = a sterol 3-beta-D-glucoside + UDP + H(+). The enzyme catalyses ergosterol + UDP-alpha-D-glucose = ergosteryl 3-beta-D-glucoside + UDP + H(+). In terms of biological role, sterol glycosyltransferase responsible for the glycosylation of ergosterol to form ergosterol-glucoside. Shows also activity in vitro on other sterols such as cholesterol, beta-sitosterol, stigmasterol and tomatidine. Probable sterol 3-beta-glucosyltransferase that mediates autophagic degradation of peroxisomes (pexophagy). In Komagataella phaffii (strain GS115 / ATCC 20864) (Yeast), this protein is Sterol 3-beta-glucosyltransferase.